A 291-amino-acid chain; its full sequence is Alpha/beta-gliadin A-II (291 aa).

An N-terminal signal peptide occupies residues 1 to 20 (MKTFPILALLAIVATTATTA). Over residues 32–55 (NPSQQQPQEQVPLVQEQQFQGQQQ) the composition is skewed to low complexity. 2 disordered regions span residues 32 to 120 (NPSQ…QQQQ) and 227 to 250 (QQYPSGQGFFQPSQQNPQAQGSFQ). 2 stretches are compositionally biased toward pro residues: residues 56 to 71 (PFPPQQPYPQPQPFPS) and 81 to 104 (FPQPQLPYPQPQPFRPQQPYPQPQ). 2 stretches are compositionally biased toward low complexity: residues 105–120 (PQYSQPQQPISQQQQQ) and 227–237 (QQYPSGQGFFQ). Residues 238 to 250 (PSQQNPQAQGSFQ) show a composition bias toward polar residues.

This sequence belongs to the gliadin/glutenin family. Post-translationally, substrate of transglutaminase.

Gliadin is the major seed storage protein in wheat. The polypeptide is Alpha/beta-gliadin A-II (Triticum aestivum (Wheat)).